The primary structure comprises 388 residues: MANTWRLDIRGLDGSLVLIVLALITIGLVMVLSSSVAVSEVRFGHQWHYFQRQVFALGVGGLFAALVLMVPSQSWLQHRGKWFLLGLVLLALVLIFGREIGGAKRWLPLVVMNFQPAEWMKIATILFLAGYLQRHQDAVKQDSTAVIRLFLPFGIMAGLLLLQPDYGTTVLIAGVLVGMLFIAGAPFRYFVITVLPIGAILAVLLINSPYRMARVMNFMDPWQDPYGVGYQLSQALMAIGSGGITGSGLGASVQKLLYLPDAHTDFMFAVFAEETGWLGVVILLSLYGLLLWRMFAVAQAAWLPQAPFKALVVYGVAIMFAGQLLINVGVNLGVFPTKGLTLPFVSYGGSSLMMALLAIGLVLRIDYETRLIKGHSTEELSANPSFGS.

11 consecutive transmembrane segments (helical) span residues 16–36 (LVLI…SSSV), 54–74 (VFAL…PSQS), 82–102 (WFLL…EIGG), 109–129 (LVVM…LFLA), 144–164 (TAVI…LLQP), 167–187 (GTTV…GAPF), 189–209 (YFVI…INSP), 233–253 (SQAL…GASV), 277–297 (WLGV…MFAV), 310–330 (ALVV…NVGV), and 342–362 (LPFV…IGLV).

The protein belongs to the SEDS family. FtsW subfamily.

It is found in the cell inner membrane. It carries out the reaction [GlcNAc-(1-&gt;4)-Mur2Ac(oyl-L-Ala-gamma-D-Glu-L-Lys-D-Ala-D-Ala)](n)-di-trans,octa-cis-undecaprenyl diphosphate + beta-D-GlcNAc-(1-&gt;4)-Mur2Ac(oyl-L-Ala-gamma-D-Glu-L-Lys-D-Ala-D-Ala)-di-trans,octa-cis-undecaprenyl diphosphate = [GlcNAc-(1-&gt;4)-Mur2Ac(oyl-L-Ala-gamma-D-Glu-L-Lys-D-Ala-D-Ala)](n+1)-di-trans,octa-cis-undecaprenyl diphosphate + di-trans,octa-cis-undecaprenyl diphosphate + H(+). Its pathway is cell wall biogenesis; peptidoglycan biosynthesis. Functionally, peptidoglycan polymerase that is essential for cell division. This is Probable peptidoglycan glycosyltransferase FtsW from Thiomicrospira cyclica (strain DSM 14477 / JCM 11371 / ALM1) (Thioalkalimicrobium cyclicum).